A 569-amino-acid polypeptide reads, in one-letter code: MMRFTKFYAPSLKEAPKDASLPSHIFLTRAGFVEQIGSGLYNFLPLGKRVLDKIKNIVKEEMDKAGAQEVNLSFITPASLWQESGRYNVFGKELLRFKDRKENEFVLGPTHEEAMLSLVKNKITSYKQLPLHLYQIGLKFRDEARPRFGLLRCREFLMKDGYSFHANEEDLGREFELMYKTYSQILQRMGLDFRAVEADSGAIGGSGSKEFMVLAKNGEDDILICENCDYAANIEAAKRAKKTCQDERPEANYASKFHTPNIKTIDSLAQFFKTNAFYTIKAVVKKAIYENESKLVVFFIRGSDDLQEVKAQNACSALELVDASEEELEKAGLVAGFIGFVGLKDIDFYIDFELENEKQMIMGANEKDYHLIGIDVVNLNKDRFKDLIEVKEGDCCVKCGAKLKQSKGIEVGHIFKLGQKYSKAMNANFLDENGKSQPFYMGCYGIGVSRLLAVAIEASHDEKGCIWNKTLAPFVLEIIVSNIKDEKTLEFANKLYEDLTELGLEVLLDDRNERFGVKMNDFELMGFPYALVIGKGLENNEIEFIQREGLVKELIKTDELTEILKKKVL.

Belongs to the class-II aminoacyl-tRNA synthetase family. ProS type 1 subfamily. Homodimer.

The protein localises to the cytoplasm. It catalyses the reaction tRNA(Pro) + L-proline + ATP = L-prolyl-tRNA(Pro) + AMP + diphosphate. Its function is as follows. Catalyzes the attachment of proline to tRNA(Pro) in a two-step reaction: proline is first activated by ATP to form Pro-AMP and then transferred to the acceptor end of tRNA(Pro). As ProRS can inadvertently accommodate and process non-cognate amino acids such as alanine and cysteine, to avoid such errors it has two additional distinct editing activities against alanine. One activity is designated as 'pretransfer' editing and involves the tRNA(Pro)-independent hydrolysis of activated Ala-AMP. The other activity is designated 'posttransfer' editing and involves deacylation of mischarged Ala-tRNA(Pro). The misacylated Cys-tRNA(Pro) is not edited by ProRS. The polypeptide is Proline--tRNA ligase (Campylobacter jejuni subsp. doylei (strain ATCC BAA-1458 / RM4099 / 269.97)).